A 193-amino-acid polypeptide reads, in one-letter code: Threonylcarbamoyl-AMP synthase (193 aa).

In terms of domain architecture, YrdC-like spans 14 to 193 (SRLQQRARKQ…IDLESGRVLR (180 aa)).

The protein belongs to the SUA5 family. TsaC subfamily.

The protein resides in the cytoplasm. The enzyme catalyses L-threonine + hydrogencarbonate + ATP = L-threonylcarbamoyladenylate + diphosphate + H2O. Required for the formation of a threonylcarbamoyl group on adenosine at position 37 (t(6)A37) in tRNAs that read codons beginning with adenine. Catalyzes the conversion of L-threonine, HCO(3)(-)/CO(2) and ATP to give threonylcarbamoyl-AMP (TC-AMP) as the acyladenylate intermediate, with the release of diphosphate. The polypeptide is Threonylcarbamoyl-AMP synthase (Chromobacterium violaceum (strain ATCC 12472 / DSM 30191 / JCM 1249 / CCUG 213 / NBRC 12614 / NCIMB 9131 / NCTC 9757 / MK)).